We begin with the raw amino-acid sequence, 261 residues long: Acidic leucine-rich nuclear phosphoprotein 32 family member B (261 aa).

LRR repeat units follow at residues 16 to 40 (PAAVRELVLDNCKSNDGKIEGLTAE), 43 to 64 (NLEFLSLINVGLISVSNLPKLP), 65 to 87 (KLKKLELSDNRICGGLDMLAEKL), and 89 to 110 (NLTHLNLSGNKLKDIGTLEPLK). Residue Lys86 is modified to N6-acetyllysine. In terms of domain architecture, LRRCT spans 123 to 161 (CEVTNLNDYRESVFKLLPQLTYLDGYDREDREAPDSDAE). The tract at residues 149–261 (DREDREAPDS…RETDDEGEDD (113 aa)) is disordered. Positions 157–243 (DSDAEVDGVD…DEDEDEEEEE (87 aa)) are enriched in acidic residues. Ser158 is subject to Phosphoserine. Residues 244-254 (SGKGEGRKRET) show a composition bias toward basic and acidic residues. Thr254 bears the Phosphothreonine mark.

Belongs to the ANP32 family. As to quaternary structure, monomer. Interacts with histones H3 and H4. In terms of processing, some glutamate residues are glycylated by TTLL8. This modification occurs exclusively on glutamate residues and results in a glycine chain on the gamma-carboxyl group.

The protein localises to the nucleus. Its function is as follows. Multifunctional protein working as a cell cycle progression factor as well as a cell survival factor. Required for the progression from the G1 to the S phase. Anti-apoptotic protein which functions as a caspase-3 inhibitor. Has no phosphatase 2A (PP2A) inhibitor activity. Exhibits histone chaperone properties, stimulating core histones to assemble into a nucleosome. The sequence is that of Acidic leucine-rich nuclear phosphoprotein 32 family member B (ANP32B) from Ovis aries (Sheep).